The following is a 381-amino-acid chain: MSILVYEVSKSLGNLKVLDRVSLYVRKVSLVALLGPSGSGKSSLLRIIAGLDSPDYGSVWLHGTDMTNTSTQYRHMAFVFQHYALFKNMTVYENISFGLRLRGFSYQKIRNKVNDLLDCLRISDIVSEYPGKLSGGQKQRVALARSLAIKSDFLLLDEPFGALDGELRRHLSKWLKRYLKDNGITTIMVTHDQKEAISMADEIVVLKQGRFLQQGRSKNLYDEPIDYFVGIFSGSFIEFPQLEESLDAPLGSSSSSSSSTKKSMEKDFTPFIPDLIWSQIFTNQSIHHYHFFLRPHELYLESQIDLKAIPVQIKKIIYKRTFVQLDLSITPSSWNITIPIGYQAFRKLNIQSFVQKLYIKPRNQVYLRAYPKKKNIISKQI.

Residues 3–233 enclose the ABC transporter domain; it reads ILVYEVSKSL…PIDYFVGIFS (231 aa). 35–42 is a binding site for ATP; the sequence is GPSGSGKS.

Belongs to the ABC transporter superfamily. Sulfate/tungstate importer (TC 3.A.1.6) family.

The protein localises to the plastid. Its subcellular location is the chloroplast. It catalyses the reaction sulfate(out) + ATP + H2O = sulfate(in) + ADP + phosphate + H(+). The enzyme catalyses thiosulfate(out) + ATP + H2O = thiosulfate(in) + ADP + phosphate + H(+). Part of the ABC transporter complex involved in sulfate/thiosulfate import. Responsible for energy coupling to the transport system. The polypeptide is Sulfate/thiosulfate import ATP-binding protein CysA (Anthoceros angustus (Hornwort)).